Reading from the N-terminus, the 75-residue chain is U-stichotoxin-Hau3a (75 aa).

Positions 1 to 19 (MNHLIILVVAAVFLGMASA) are cleaved as a signal peptide. Residues 20–26 (EDVFHKR) constitute a propeptide that is removed on maturation. Intrachain disulfides connect Cys31–Cys71, Cys33–Cys61, and Cys54–Cys72.

Belongs to the sea anemone sodium channel inhibitory toxin family. Type I subfamily. In terms of processing, contains 3 disulfide bonds.

It localises to the secreted. Its subcellular location is the nematocyst. Toxin that is lethal to crab. This is U-stichotoxin-Hau3a from Heteractis aurora (Banded sea anemone).